A 265-amino-acid polypeptide reads, in one-letter code: Hydroxyethylthiazole kinase (265 aa).

Met50 provides a ligand contact to substrate. 2 residues coordinate ATP: Arg125 and Thr171. Residue Gly198 participates in substrate binding.

It belongs to the Thz kinase family. Mg(2+) is required as a cofactor.

It carries out the reaction 5-(2-hydroxyethyl)-4-methylthiazole + ATP = 4-methyl-5-(2-phosphooxyethyl)-thiazole + ADP + H(+). It participates in cofactor biosynthesis; thiamine diphosphate biosynthesis; 4-methyl-5-(2-phosphoethyl)-thiazole from 5-(2-hydroxyethyl)-4-methylthiazole: step 1/1. Functionally, catalyzes the phosphorylation of the hydroxyl group of 4-methyl-5-beta-hydroxyethylthiazole (THZ). The polypeptide is Hydroxyethylthiazole kinase (Salmonella agona (strain SL483)).